The sequence spans 314 residues: ATP synthase gamma chain (314 aa).

The protein belongs to the ATPase gamma chain family. In terms of assembly, F-type ATPases have 2 components, CF(1) - the catalytic core - and CF(0) - the membrane proton channel. CF(1) has five subunits: alpha(3), beta(3), gamma(1), delta(1), epsilon(1). CF(0) has three main subunits: a, b and c.

The protein resides in the cell membrane. Produces ATP from ADP in the presence of a proton gradient across the membrane. The gamma chain is believed to be important in regulating ATPase activity and the flow of protons through the CF(0) complex. This chain is ATP synthase gamma chain, found in Cutibacterium acnes (strain DSM 16379 / KPA171202) (Propionibacterium acnes).